The following is a 164-amino-acid chain: Protein-export protein SecB (164 aa).

Belongs to the SecB family. Homotetramer, a dimer of dimers. One homotetramer interacts with 1 SecA dimer.

The protein localises to the cytoplasm. In terms of biological role, one of the proteins required for the normal export of preproteins out of the cell cytoplasm. It is a molecular chaperone that binds to a subset of precursor proteins, maintaining them in a translocation-competent state. It also specifically binds to its receptor SecA. In Rhodopseudomonas palustris (strain BisB18), this protein is Protein-export protein SecB.